Consider the following 635-residue polypeptide: Signal recognition particle subunit SRP72 (635 aa).

TPR repeat units follow at residues 7–42 (GGLY…YPKE), 75–105 (GHVG…DKDD), 106–139 (VKAL…HSDD), 171–204 (YSQL…CRKS), 220–253 (DSIR…NHPD), 255–290 (SVKA…DQTK), and 436–469 (VEVE…QCRL). The segment at 539-635 (KRKRKIRLPK…QKKKKNASKF (97 aa)) is disordered. Basic and acidic residues predominate over residues 557–569 (DPERWLPRQERST). Over residues 625–635 (KQKKKKNASKF) the composition is skewed to basic residues.

Belongs to the SRP72 family. In terms of assembly, heterodimer with srpa-68. Srpa-68-srpa-72 heterodimer formation is stabilized by the presence of 7SL RNA. Component of a signal recognition particle (SRP) complex that consists of a 7SL RNA molecule of 300 nucleotides and six protein subunits: srpa-72, srpa-68, SRP54, F37F2.2/SRP19, F25G6.8/SRP14 and ZK512.4/SRP9. Within the SRP complex, interacts (via N-terminus) with srpa-68 (via C-terminus).

It is found in the cytoplasm. The protein localises to the endoplasmic reticulum. In terms of biological role, component of the signal recognition particle (SRP) complex, a ribonucleoprotein complex that mediates the cotranslational targeting of secretory and membrane proteins to the endoplasmic reticulum (ER). The SRP complex interacts with the signal sequence in nascent secretory and membrane proteins and directs them to the membrane of the ER. The SRP complex targets the ribosome-nascent chain complex to the SRP receptor (SR), which is anchored in the ER, where SR compaction and GTPase rearrangement drive cotranslational protein translocation into the ER. Binds the signal recognition particle RNA (7SL RNA) in presence of srpa-68. Can bind 7SL RNA with low affinity. The SRP complex possibly participates in the elongation arrest function. This Caenorhabditis elegans protein is Signal recognition particle subunit SRP72.